Reading from the N-terminus, the 545-residue chain is Thermosome subunit (545 aa).

This sequence belongs to the TCP-1 chaperonin family. In terms of assembly, forms an oligomeric complex of eight-membered rings.

Functionally, molecular chaperone; binds unfolded polypeptides in vitro, and has a weak ATPase activity. This Methanopyrus kandleri (strain AV19 / DSM 6324 / JCM 9639 / NBRC 100938) protein is Thermosome subunit (ths).